A 281-amino-acid polypeptide reads, in one-letter code: Very long chain fatty acid elongase 7 (281 aa).

Ala-2 bears the N-acetylalanine mark. The Lumenal segment spans residues 2 to 27; that stretch reads AFSDLTSRTVRFYDNWIKDADPRVEN. The helical transmembrane segment at 28-48 threads the bilayer; that stretch reads WLLMSSPLPQTIILGLYVYFV. Topologically, residues 49–72 are cytoplasmic; it reads TSLGPKLMENRKPFELKKAMITYN. A helical membrane pass occupies residues 73–93; that stretch reads FFIVLFSVYMCYEFVMSGWGT. Residues 94–115 lie on the Lumenal side of the membrane; the sequence is GYSFRCDIVDYSQSPRAMRMVH. A disulfide bridge links Cys-99 with Cys-231. The helical transmembrane segment at 116-136 threads the bilayer; the sequence is TCWLYYFSKFIELFDTIFFVL. Residues Lys-124, Arg-137, Lys-139, Gln-142, and His-147 each contribute to the 3-oxoeicosanoyl-CoA site. Topologically, residues 137-142 are cytoplasmic; it reads RKKNSQ. Residues 143–162 traverse the membrane as a helical segment; it reads VTFLHVFHHTIMPWTWWFGV. The HxxHH motif signature appears at 147–151; the sequence is HVFHH. The active-site Nucleophile is His-150. Residues 163 to 176 lie on the Lumenal side of the membrane; sequence KFAAGGLGTFHALL. The helical transmembrane segment at 177–197 threads the bilayer; sequence NTAVHVVMYFYYGLCAMGPAY. Residues Tyr-187, Lys-204, Thr-208, and Gln-211 each contribute to the 3-oxoeicosanoyl-CoA site. The Cytoplasmic portion of the chain corresponds to 198-206; that stretch reads QKYLWWKKH. Residues 207–227 form a helical membrane-spanning segment; the sequence is LTSLQLVQFVLVTVHIGQIFF. Topologically, residues 228 to 236 are lumenal; that stretch reads MEDCNYQYP. A helical transmembrane segment spans residues 237 to 257; sequence VFLYIIMSYGCIFLLLFLHFW. The Cytoplasmic portion of the chain corresponds to 258-281; the sequence is YRAYTKGQRLPKTMENGNCKSKHH. Arg-266 is a binding site for 3-oxoeicosanoyl-CoA. Residues 277–281 carry the Di-lysine motif motif; the sequence is KSKHH.

The protein belongs to the ELO family. ELOVL7 subfamily. Homodimer. Interacts with TECR.

Its subcellular location is the endoplasmic reticulum membrane. The enzyme catalyses a very-long-chain acyl-CoA + malonyl-CoA + H(+) = a very-long-chain 3-oxoacyl-CoA + CO2 + CoA. It catalyses the reaction eicosanoyl-CoA + malonyl-CoA + H(+) = 3-oxodocosanoyl-CoA + CO2 + CoA. The catalysed reaction is (5Z,8Z,11Z,14Z)-eicosatetraenoyl-CoA + malonyl-CoA + H(+) = (7Z,10Z,13Z,16Z)-3-oxodocosatetraenoyl-CoA + CO2 + CoA. It carries out the reaction (6Z,9Z,12Z)-octadecatrienoyl-CoA + malonyl-CoA + H(+) = (8Z,11Z,14Z)-3-oxoeicosatrienoyl-CoA + CO2 + CoA. The enzyme catalyses (9Z,12Z)-octadecadienoyl-CoA + malonyl-CoA + H(+) = (11Z,14Z)-3-oxoicosa-11,14-dienoyl-CoA + CO2 + CoA. It catalyses the reaction (9Z)-octadecenoyl-CoA + malonyl-CoA + H(+) = 3-oxo-(11Z)-eicosenoyl-CoA + CO2 + CoA. The catalysed reaction is octadecanoyl-CoA + malonyl-CoA + H(+) = 3-oxoeicosanoyl-CoA + CO2 + CoA. It carries out the reaction hexadecanoyl-CoA + malonyl-CoA + H(+) = 3-oxooctadecanoyl-CoA + CO2 + CoA. The enzyme catalyses (9Z,12Z,15Z)-octadecatrienoyl-CoA + malonyl-CoA + H(+) = (11Z,14Z,17Z)-3-oxoeicosatrienoyl-CoA + CO2 + CoA. It participates in lipid metabolism; fatty acid biosynthesis. Catalyzes the first and rate-limiting reaction of the four reactions that constitute the long-chain fatty acids elongation cycle. This endoplasmic reticulum-bound enzymatic process allows the addition of 2 carbons to the chain of long- and very long-chain fatty acids (VLCFAs) per cycle. Condensing enzyme with higher activity toward C18 acyl-CoAs, especially C18:3(n-3) acyl-CoAs and C18:3(n-6)-CoAs. Also active toward C20:4-, C18:0-, C18:1-, C18:2- and C16:0-CoAs, and weakly toward C20:0-CoA. Little or no activity toward C22:0-, C24:0-, or C26:0-CoAs. May participate in the production of saturated and polyunsaturated VLCFAs of different chain lengths that are involved in multiple biological processes as precursors of membrane lipids and lipid mediators. The protein is Very long chain fatty acid elongase 7 of Rattus norvegicus (Rat).